The chain runs to 615 residues: Delta(14)-sterol reductase LBR (615 aa).

The 62-residue stretch at 1 to 62 (MPSRKFADGE…DIKPLTSFRQ (62 aa)) folds into the Tudor domain. The Nuclear segment spans residues 1-211 (MPSRKFADGE…IRAKDLEFGG (211 aa)). A disordered region spans residues 52–109 (NDIKPLTSFRQRKGGSTSSSPSRRRGSRSRSRSRSPGRPPKSARRSASASHQADIKEA). An N6-acetyllysine modification is found at lysine 55. Threonine 58 bears the Phosphothreonine mark. Phosphoserine is present on residues serine 59 and serine 67. 2 positions are modified to phosphoserine; by CDK1: serine 71 and serine 86. Over residues 73-86 (SRRRGSRSRSRSRS) the composition is skewed to basic residues. Phosphoserine is present on residues serine 97 and serine 99. Threonine 118 carries the post-translational modification Phosphothreonine. The residue at position 128 (serine 128) is a Phosphoserine. Phosphothreonine is present on threonine 200. Helical transmembrane passes span 212 to 232 (VPGV…LLLM), 258 to 278 (VFGV…LPIG), 299 to 319 (FYAF…GVEF), 326 to 346 (FLQF…YLYM), 386 to 406 (FCEL…MLLA), 447 to 467 (IIHD…VPFI), 481 to 501 (EVSW…YVIF), and 561 to 581 (PCGF…MLLV). Residues lysine 594 and lysine 601 each carry the N6-acetyllysine modification.

Belongs to the ERG4/ERG24 family. As to quaternary structure, interacts with CBX5. Interacts with DNA. Interaction with DNA is sequence independent with higher affinity for supercoiled and relaxed circular DNA than linear DNA. Interacts with lamin B. Interacts with CLNK. Interacts with TMEM147; promoting LBR localization to the nucleus inner membrane. Phosphorylated by CDK1 in mitosis when the inner nuclear membrane breaks down into vesicles that dissociate from the lamina and the chromatin. It is phosphorylated by different protein kinases in interphase when the membrane is associated with these structures. Phosphorylation of LBR and HP1 proteins may be responsible for some of the alterations in chromatin organization and nuclear structure which occur at various times during the cell cycle. Phosphorylated by SRPK1. In late anaphase LBR is dephosphorylated, probably by PP1 and/or PP2A, allowing reassociation with chromatin. Expressed in the bone marrow, liver, heart, adrenal gland, lung, placenta and uterus. Expressed in osteoclasts and osteoblast-like cells.

It is found in the nucleus inner membrane. Its subcellular location is the endoplasmic reticulum membrane. The protein localises to the cytoplasm. The protein resides in the nucleus. The enzyme catalyses 5alpha-cholest-8,14-dien-3beta-ol + NADPH + H(+) = 5alpha-cholest-8-en-3beta-ol + NADP(+). It catalyses the reaction 4,4-dimethyl-5alpha-cholesta-8,24-dien-3beta-ol + NADP(+) = 4,4-dimethyl-5alpha-cholesta-8,14,24-trien-3beta-ol + NADPH + H(+). The catalysed reaction is 4,4-dimethyl-8,14-cholestadien-3beta-ol + NADPH + H(+) = 4,4-dimethyl-5alpha-cholest-8-en-3beta-ol + NADP(+). It functions in the pathway steroid biosynthesis; cholesterol biosynthesis. Catalyzes the reduction of the C14-unsaturated bond of lanosterol, as part of the metabolic pathway leading to cholesterol biosynthesis. Plays a critical role in myeloid cell cholesterol biosynthesis which is essential to both myeloid cell growth and functional maturation. Mediates the activation of NADPH oxidases, perhaps by maintaining critical levels of cholesterol required for membrane lipid raft formation during neutrophil differentiation. Anchors the lamina and the heterochromatin to the inner nuclear membrane. The polypeptide is Delta(14)-sterol reductase LBR (LBR) (Homo sapiens (Human)).